The chain runs to 288 residues: Bifunctional protein FolD (288 aa).

166-168 (GRS) contacts NADP(+).

This sequence belongs to the tetrahydrofolate dehydrogenase/cyclohydrolase family. As to quaternary structure, homodimer.

It catalyses the reaction (6R)-5,10-methylene-5,6,7,8-tetrahydrofolate + NADP(+) = (6R)-5,10-methenyltetrahydrofolate + NADPH. It carries out the reaction (6R)-5,10-methenyltetrahydrofolate + H2O = (6R)-10-formyltetrahydrofolate + H(+). Its pathway is one-carbon metabolism; tetrahydrofolate interconversion. Functionally, catalyzes the oxidation of 5,10-methylenetetrahydrofolate to 5,10-methenyltetrahydrofolate and then the hydrolysis of 5,10-methenyltetrahydrofolate to 10-formyltetrahydrofolate. The protein is Bifunctional protein FolD of Levilactobacillus brevis (strain ATCC 367 / BCRC 12310 / CIP 105137 / JCM 1170 / LMG 11437 / NCIMB 947 / NCTC 947) (Lactobacillus brevis).